Reading from the N-terminus, the 502-residue chain is Maturase K (502 aa).

This sequence belongs to the intron maturase 2 family. MatK subfamily.

It is found in the plastid. It localises to the chloroplast. Functionally, usually encoded in the trnK tRNA gene intron. Probably assists in splicing its own and other chloroplast group II introns. This is Maturase K from Ehretia anacua (Sandpaper tree).